The chain runs to 330 residues: Malate dehydrogenase (330 aa).

12-18 contributes to the NAD(+) binding site; it reads GAAGQIG. Substrate contacts are provided by R93 and R99. Residues N106, Q113, and 130 to 132 each bind NAD(+); that span reads VGN. N132 and R166 together coordinate substrate. The Proton acceptor role is filled by H191.

This sequence belongs to the LDH/MDH superfamily. MDH type 2 family.

It catalyses the reaction (S)-malate + NAD(+) = oxaloacetate + NADH + H(+). In terms of biological role, catalyzes the reversible oxidation of malate to oxaloacetate. This is Malate dehydrogenase from Azoarcus sp. (strain BH72).